A 417-amino-acid chain; its full sequence is RH-like protein (417 aa).

The next 11 membrane-spanning stretches (helical) occupy residues 12-32 (CLPLWALTLEAALILLFFFFT), 44-64 (LVASYQVCQDLTVMAVLGLGF), 77-97 (VAFNLFLLALGVQWAILLDGF), 125-145 (ISMNAVLGKVNLAQLVVMELV), 172-192 (IHVFAAYFGLTVAWCLPKPLP), 203-223 (TSPSLFAMLGTLFLWMFWPTF), 238-258 (VFSTYYALAVSAVTAISVSSL), 265-285 (INMTYMPNAGLAGGVAVGASC), 287-307 (VIHSPWIAMVLGLVAGLISFG), 331-351 (TFGLPALLGEITYIVLMALRV), and 358-378 (MIGFQVLLSTGTLSLAMAMSI).

The protein belongs to the ammonium transporter (TC 2.A.49) family. Rh subfamily.

The protein localises to the membrane. Functionally, may be part of an oligomeric complex which is likely to have a transport or channel function in the erythrocyte membrane. The chain is RH-like protein from Macaca fascicularis (Crab-eating macaque).